Reading from the N-terminus, the 410-residue chain is Gamma-glutamyl phosphate reductase (410 aa).

This sequence belongs to the gamma-glutamyl phosphate reductase family.

Its subcellular location is the cytoplasm. The catalysed reaction is L-glutamate 5-semialdehyde + phosphate + NADP(+) = L-glutamyl 5-phosphate + NADPH + H(+). It participates in amino-acid biosynthesis; L-proline biosynthesis; L-glutamate 5-semialdehyde from L-glutamate: step 2/2. Catalyzes the NADPH-dependent reduction of L-glutamate 5-phosphate into L-glutamate 5-semialdehyde and phosphate. The product spontaneously undergoes cyclization to form 1-pyrroline-5-carboxylate. This Campylobacter jejuni subsp. jejuni serotype O:23/36 (strain 81-176) protein is Gamma-glutamyl phosphate reductase.